Consider the following 201-residue polypeptide: Ribosomal RNA large subunit methyltransferase E (201 aa).

S-adenosyl-L-methionine is bound by residues Gly49, Trp51, Asp69, Asp87, and Asp111. Lys151 functions as the Proton acceptor in the catalytic mechanism.

It belongs to the class I-like SAM-binding methyltransferase superfamily. RNA methyltransferase RlmE family.

It localises to the cytoplasm. It carries out the reaction uridine(2552) in 23S rRNA + S-adenosyl-L-methionine = 2'-O-methyluridine(2552) in 23S rRNA + S-adenosyl-L-homocysteine + H(+). Specifically methylates the uridine in position 2552 of 23S rRNA at the 2'-O position of the ribose in the fully assembled 50S ribosomal subunit. The polypeptide is Ribosomal RNA large subunit methyltransferase E (Nitratidesulfovibrio vulgaris (strain DSM 19637 / Miyazaki F) (Desulfovibrio vulgaris)).